The sequence spans 1254 residues: Ubiquitin carboxyl-terminal hydrolase 12 (1254 aa).

Ser-84 carries the phosphoserine modification. In terms of domain architecture, DUSP spans 97–199 (NVLEQQRDVV…GSYPVVTNLV (103 aa)). One can recognise a USP domain in the interval 364-1110 (TGLVNLGNTC…SAYLLFYIRR (747 aa)). The active-site Nucleophile is Cys-373. The interval 827 to 893 (DEGDTEGSEA…EPELTDKPEA (67 aa)) is disordered. The span at 854-864 (TVTNNENVNNT) shows a compositional bias: low complexity. A compositionally biased stretch (acidic residues) spans 867–883 (RDEDMELTDDVEEDAST). Residue His-1068 is the Proton acceptor of the active site. The residue at position 1160 (Ser-1160) is a Phosphoserine. The interval 1188–1207 (QDCNDEDDNDDGERTNSGRR) is disordered. Residues 1189 to 1198 (DCNDEDDNDD) are compositionally biased toward acidic residues.

This sequence belongs to the peptidase C19 family. Interacts with FZO1.

It carries out the reaction Thiol-dependent hydrolysis of ester, thioester, amide, peptide and isopeptide bonds formed by the C-terminal Gly of ubiquitin (a 76-residue protein attached to proteins as an intracellular targeting signal).. In terms of biological role, ubiquitin carboxyl-terminal hydrolase that recognizes ubiquitin chains that stabilize FZO1 and promote mitochondrial fusion. UBP12 deubiquitylates FZO1 only after oligomerization. This chain is Ubiquitin carboxyl-terminal hydrolase 12 (UBP12), found in Saccharomyces cerevisiae (strain ATCC 204508 / S288c) (Baker's yeast).